Here is a 571-residue protein sequence, read N- to C-terminus: 15-cis-phytoene desaturase, chloroplastic/chromoplastic (571 aa).

Residues 1–96 constitute a chloroplast and chromoplast transit peptide; the sequence is MDTGCLSSMN…FRNSERPSKP (96 aa). Residues A107, 126–127, K134, 151–152, and Y157 contribute to the FAD site; these read EA and HI. Substrate is bound at residue R292. 2 residues coordinate FAD: I334 and D523. Residue A531 coordinates substrate. Residue M533 participates in FAD binding.

The protein belongs to the carotenoid/retinoid oxidoreductase family. In terms of assembly, homotetramer. FAD is required as a cofactor.

It is found in the plastid. The protein localises to the chloroplast. Its subcellular location is the chromoplast. It localises to the membrane. It catalyses the reaction 2 a plastoquinone + 15-cis-phytoene = 9,9',15-tri-cis-zeta-carotene + 2 a plastoquinol. Its pathway is carotenoid biosynthesis; lycopene biosynthesis. In terms of biological role, converts phytoene into zeta-carotene via the intermediary of phytofluene by the symmetrical introduction of two double bonds at the C-11 and C-11' positions of phytoene with a concomitant isomerization of two neighboring double bonds at the C9 and C9' positions from trans to cis. This is 15-cis-phytoene desaturase, chloroplastic/chromoplastic (PDS1) from Zea mays (Maize).